The primary structure comprises 2242 residues: Multifunctional protein CAD (2242 aa).

The interval 1-365 is GATase (Glutamine amidotransferase); it reads MATLFLDDGS…CARDVKLGVN (365 aa). L-glutamine-binding residues include serine 44, glycine 222, and glycine 224. Positions 177-363 constitute a Glutamine amidotransferase type-1 domain; that stretch reads KIMAVDCGMK…LECARDVKLG (187 aa). The active-site Nucleophile; for GATase activity is cysteine 252. Leucine 253, glutamine 256, asparagine 294, glycine 296, and phenylalanine 297 together coordinate L-glutamine. Catalysis depends on for GATase activity residues histidine 336 and glutamate 338. The interval 366–397 is linker; it reads LDKTVKGRVISHYSFKNGTENSKTPPGRIQPH. Positions 398-937 are CPSase A; the sequence is KVLILGSGGL…GEGHDLDFTK (540 aa). Positions 398-1462 are CPSase (Carbamoyl-phosphate synthase); sequence KVLILGSGGL…TPPVKTHIDS (1065 aa). Positions 518, 558, 564, 565, 595, 602, 628, 629, 630, 671, and 685 each coordinate ATP. ATP-grasp domains follow at residues 522–714 and 1057–1248; these read VEKM…KLAL and SRML…KVIM. Mg(2+) is bound by residues glutamine 671, glutamate 685, and asparagine 687. Mn(2+) contacts are provided by glutamine 671, glutamate 685, and asparagine 687. Positions 938 to 1462 are CPSase B; it reads PHVMVIGSGV…TPPVKTHIDS (525 aa). 10 residues coordinate ATP: arginine 1093, lysine 1132, isoleucine 1134, glutamate 1139, glycine 1164, valine 1165, histidine 1166, serine 1167, glutamine 1207, and glutamate 1219. Residues glutamine 1207, glutamate 1219, and asparagine 1221 each coordinate Mg(2+). Glutamine 1207, glutamate 1219, and asparagine 1221 together coordinate Mn(2+). The MGS-like domain maps to 1313-1469; it reads FKIPKKNILL…IDSMSSHKLI (157 aa). Residues 1463-1796 form a DHOase (dihydroorotase) region; the sequence is MSSHKLIRLP…KGRVRRVVLR (334 aa). 2 residues coordinate Zn(2+): histidine 1478 and histidine 1480. (S)-dihydroorotate is bound by residues arginine 1482 and asparagine 1512. The Zn(2+) site is built by lysine 1563, histidine 1597, cysteine 1620, histidine 1621, and glutamate 1644. The residue at position 1563 (lysine 1563) is an N6-carboxylysine. (S)-dihydroorotate is bound at residue arginine 1668. Residue aspartate 1693 participates in Zn(2+) binding. Residue aspartate 1693 is the For DHOase activity of the active site. Positions 1697 and 1709 each coordinate (S)-dihydroorotate. The tract at residues 1797-1934 is linker; the sequence is GEVAYIDGQV…QAVPHPYSLL (138 aa). The interval 1829–1862 is disordered; it reads PTTVKTPEHSKPTQTETVRTRTASPRRLASSGPA. Residues 1840–1851 are compositionally biased toward polar residues; sequence PTQTETVRTRTA. The tract at residues 1935-2242 is ATCase (Aspartate transcarbamylase); the sequence is LHPFVGQHIL…ALLATVLGKF (308 aa). The carbamoyl phosphate site is built by arginine 1992 and threonine 1993. Residue lysine 2020 coordinates L-aspartate. Residues arginine 2041, histidine 2069, and glutamine 2072 each contribute to the carbamoyl phosphate site. L-aspartate is bound by residues arginine 2102 and arginine 2163. Leucine 2202 and proline 2203 together coordinate carbamoyl phosphate.

In the N-terminal section; belongs to the CarA family. It in the 2nd section; belongs to the CarB family. This sequence in the 3rd section; belongs to the metallo-dependent hydrolases superfamily. DHOase family. CAD subfamily. The protein in the C-terminal section; belongs to the aspartate/ornithine carbamoyltransferase superfamily. ATCase family. Homohexamer. The cofactor is Mg(2+). Mn(2+) is required as a cofactor. Requires Zn(2+) as cofactor. In terms of tissue distribution, present in the testis but not in the liver.

The protein localises to the cytoplasm. The protein resides in the nucleus. The enzyme catalyses hydrogencarbonate + L-glutamine + 2 ATP + H2O = carbamoyl phosphate + L-glutamate + 2 ADP + phosphate + 2 H(+). The catalysed reaction is L-glutamine + H2O = L-glutamate + NH4(+). It carries out the reaction hydrogencarbonate + NH4(+) + 2 ATP = carbamoyl phosphate + 2 ADP + phosphate + 2 H(+). It catalyses the reaction carbamoyl phosphate + L-aspartate = N-carbamoyl-L-aspartate + phosphate + H(+). The enzyme catalyses (S)-dihydroorotate + H2O = N-carbamoyl-L-aspartate + H(+). The protein operates within pyrimidine metabolism; UMP biosynthesis via de novo pathway; (S)-dihydroorotate from bicarbonate: step 1/3. Its pathway is pyrimidine metabolism; UMP biosynthesis via de novo pathway; (S)-dihydroorotate from bicarbonate: step 2/3. It participates in pyrimidine metabolism; UMP biosynthesis via de novo pathway; (S)-dihydroorotate from bicarbonate: step 3/3. Allosterically regulated and controlled by phosphorylation. 5-phosphoribose 1-diphosphate is an activator while UMP is an inhibitor of the CPSase reaction. Its function is as follows. Multifunctional protein that encodes the first 3 enzymatic activities of the de novo pyrimidine pathway: carbamoylphosphate synthetase (CPSase; EC 6.3.5.5), aspartate transcarbamylase (ATCase; EC 2.1.3.2) and dihydroorotase (DHOase; EC 3.5.2.3). The CPSase-function is accomplished in 2 steps, by a glutamine-dependent amidotransferase activity (GATase) that binds and cleaves glutamine to produce ammonia, followed by an ammonium-dependent carbamoyl phosphate synthetase, which reacts with the ammonia, hydrogencarbonate and ATP to form carbamoyl phosphate. The endogenously produced carbamoyl phosphate is sequestered and channeled to the ATCase active site. ATCase then catalyzes the formation of carbamoyl-L-aspartate from L-aspartate and carbamoyl phosphate. In the last step, DHOase catalyzes the cyclization of carbamoyl aspartate to dihydroorotate. The sequence is that of Multifunctional protein CAD (CAD) from Squalus acanthias (Spiny dogfish).